Here is a 621-residue protein sequence, read N- to C-terminus: Probable potassium transport system protein Kup 2 (621 aa).

Transmembrane regions (helical) follow at residues 12-32 (ITVA…LYAL), 52-72 (VLSL…VAII), 101-121 (WIIT…SMIT), 138-158 (PDLK…LFFI), 166-186 (VGKL…ILGL), 213-233 (GLAF…EALY), 249-269 (FGFV…LLLI), 286-306 (ALIP…QAVI), 338-358 (IYVP…VIGF), 370-390 (IAVT…MVLM), 396-416 (LLVA…FAAN), and 420-440 (IPEG…VLTT).

This sequence belongs to the HAK/KUP transporter (TC 2.A.72) family.

Its subcellular location is the cell inner membrane. The catalysed reaction is K(+)(in) + H(+)(in) = K(+)(out) + H(+)(out). Its function is as follows. Transport of potassium into the cell. Likely operates as a K(+):H(+) symporter. The sequence is that of Probable potassium transport system protein Kup 2 from Dechloromonas aromatica (strain RCB).